The primary structure comprises 811 residues: Phenylalanine--tRNA ligase beta subunit (811 aa).

The region spanning 40–156 (AEKNENIVVG…EDIEVGSKVD (117 aa)) is the tRNA-binding domain. The 76-residue stretch at 411-486 (KSTKEVKVPL…RIHGYDHLPY (76 aa)) folds into the B5 domain. Mg(2+)-binding residues include Asp-464, Asp-470, Glu-473, and Glu-474. Residues 717 to 810 (PRYPSVSRDI…VNKKFGSYVR (94 aa)) form the FDX-ACB domain.

It belongs to the phenylalanyl-tRNA synthetase beta subunit family. Type 1 subfamily. As to quaternary structure, tetramer of two alpha and two beta subunits. It depends on Mg(2+) as a cofactor.

It is found in the cytoplasm. It carries out the reaction tRNA(Phe) + L-phenylalanine + ATP = L-phenylalanyl-tRNA(Phe) + AMP + diphosphate + H(+). The protein is Phenylalanine--tRNA ligase beta subunit of Oceanobacillus iheyensis (strain DSM 14371 / CIP 107618 / JCM 11309 / KCTC 3954 / HTE831).